Reading from the N-terminus, the 308-residue chain is Taste receptor type 2 member 107 (308 aa).

Residues 1–7 (MLSAAEG) are Extracellular-facing. A helical membrane pass occupies residues 8-28 (ILLCVVTSEAVLGVLGDTFIA). Residues 29–43 (LANCMEYAKNKKLSK) lie on the Cytoplasmic side of the membrane. The chain crosses the membrane as a helical span at residues 44–64 (IGFILIGLAISRIGVVWIIIL). Topologically, residues 65-94 (QGYMQVFFPHILTFGNITEYITYIWVFLNH) are extracellular. Asn-80 carries an N-linked (GlcNAc...) asparagine glycan. The chain crosses the membrane as a helical span at residues 95–115 (LSVWFATNLNILYFLKIANFS). The Cytoplasmic segment spans residues 116–127 (NSVFLWLKSRVR). The helical transmembrane segment at 128-148 (VVFIFLSGCLLTSWLLCFPQF) threads the bilayer. Residues 149-180 (SKMLNNSKMYWGNTSWLQQQKNVFLINQSLTN) are Extracellular-facing. N-linked (GlcNAc...) asparagine glycosylation is found at Asn-153, Asn-161, and Asn-175. Residues 181–201 (LGIFFFIIVSLITCFLLIVFL) traverse the membrane as a helical segment. The Cytoplasmic portion of the chain corresponds to 202–232 (WRHIRQMHSDGSGLRDLNTEAHVKAMRVLIS). Residues 233-253 (FAVLFILHFVGLSIQVLCFFL) form a helical membrane-spanning segment. Over 254–258 (PQNNL) the chain is Extracellular. A helical transmembrane segment spans residues 259-279 (LFITGLIATCLYPCGHSIILI). Topologically, residues 280-308 (LGNKQLKQASLKALQHLTCCETKRNLSVT) are cytoplasmic.

This sequence belongs to the G-protein coupled receptor T2R family.

Its subcellular location is the membrane. Functionally, putative taste receptor which may play a role in the perception of bitterness. The sequence is that of Taste receptor type 2 member 107 from Rattus norvegicus (Rat).